Reading from the N-terminus, the 176-residue chain is 2-C-methyl-D-erythritol 2,4-cyclodiphosphate synthase (176 aa).

A divalent metal cation is bound by residues aspartate 22 and histidine 24. 4-CDP-2-C-methyl-D-erythritol 2-phosphate is bound by residues 22–24 (DVH) and 48–49 (HS). Histidine 56 is an a divalent metal cation binding site. Residues 70–72 (DIG), 146–149 (TTSE), phenylalanine 153, and arginine 156 contribute to the 4-CDP-2-C-methyl-D-erythritol 2-phosphate site.

Belongs to the IspF family. Homotrimer. It depends on a divalent metal cation as a cofactor.

The enzyme catalyses 4-CDP-2-C-methyl-D-erythritol 2-phosphate = 2-C-methyl-D-erythritol 2,4-cyclic diphosphate + CMP. It participates in isoprenoid biosynthesis; isopentenyl diphosphate biosynthesis via DXP pathway; isopentenyl diphosphate from 1-deoxy-D-xylulose 5-phosphate: step 4/6. In terms of biological role, involved in the biosynthesis of isopentenyl diphosphate (IPP) and dimethylallyl diphosphate (DMAPP), two major building blocks of isoprenoid compounds. Catalyzes the conversion of 4-diphosphocytidyl-2-C-methyl-D-erythritol 2-phosphate (CDP-ME2P) to 2-C-methyl-D-erythritol 2,4-cyclodiphosphate (ME-CPP) with a corresponding release of cytidine 5-monophosphate (CMP). This Xylella fastidiosa (strain 9a5c) protein is 2-C-methyl-D-erythritol 2,4-cyclodiphosphate synthase.